A 392-amino-acid polypeptide reads, in one-letter code: ADP-ribosylhydrolase ARH1 (392 aa).

Mg(2+)-binding residues include S79, D80, and D81. K109 is a substrate binding site. A substrate region spans residues 125–127 (IQT). G159 contributes to the substrate binding site. Substrate regions lie at residues 192-194 (HNN), 309-311 (FSG), and 315-316 (SS). Mg(2+)-binding residues include D348, D350, and S351.

It belongs to the ADP-ribosylglycohydrolase family. Monomer. The cofactor is Mg(2+).

The enzyme catalyses N(omega)-(ADP-D-ribosyl)-L-arginyl-[protein] + H2O = ADP-D-ribose + L-arginyl-[protein]. In terms of biological role, specifically acts as an arginine mono-ADP-ribosylhydrolase by mediating the removal of mono-ADP-ribose attached to arginine residues on proteins. The sequence is that of ADP-ribosylhydrolase ARH1 (adprh) from Dictyostelium discoideum (Social amoeba).